The primary structure comprises 451 residues: UPF0210 protein CLL_A1718 (451 aa).

Belongs to the UPF0210 family. As to quaternary structure, homodimer.

The chain is UPF0210 protein CLL_A1718 from Clostridium botulinum (strain Eklund 17B / Type B).